The sequence spans 225 residues: MSCESSMVLGYWDIRGLAHAIRLLLEFTDTSYEEKRYTCGEAPDYDRSQWLDVKFKLDLDFPNLPYLLDGKNKITQSNAILRYIARKHNMCGETEEEKIRVDIIENQVMDFRTQLIRLCYSSDHEKLKPQYLEELPGQLKQFSMFLGKFSWFAGEKLTFVDFLTYDILDQNRIFDPKCLDEFPNLKAFMCRFEALEKIAAYLQSDQFCKMPINNKMAQWGNKPVC.

The GST N-terminal domain occupies 5 to 92 (SSMVLGYWDI…YIARKHNMCG (88 aa)). Residues 11 to 12 (YW), 50 to 54 (WLDVK), and 63 to 64 (NL) each bind glutathione. Lys54 participates in a covalent cross-link: Glycyl lysine isopeptide (Lys-Gly) (interchain with G-Cter in SUMO2). A Glycyl lysine isopeptide (Lys-Gly) (interchain with G-Cter in SUMO2) cross-link involves residue Lys73. 76 to 77 (QS) serves as a coordination point for glutathione. Residues 94-212 (TEEEKIRVDI…QSDQFCKMPI (119 aa)) enclose the GST C-terminal domain. Position 120 (Tyr120) interacts with substrate.

Belongs to the GST superfamily. Mu family. In terms of assembly, homodimer. The N-terminus is blocked. As to expression, testis and brain.

The protein localises to the cytoplasm. It carries out the reaction RX + glutathione = an S-substituted glutathione + a halide anion + H(+). Its function is as follows. Conjugation of reduced glutathione to a wide number of exogenous and endogenous hydrophobic electrophiles. May govern uptake and detoxification of both endogenous compounds and xenobiotics at the testis and brain blood barriers. This Homo sapiens (Human) protein is Glutathione S-transferase Mu 3 (GSTM3).